Consider the following 139-residue polypeptide: Chorion protein S16 (139 aa).

The signal sequence occupies residues M1–A21.

Belongs to the chorion protein S16 family.

The protein localises to the secreted. Its function is as follows. Chorion membrane (egg shell) protein; plays a role in protecting the egg from the environment. The polypeptide is Chorion protein S16 (Cp16) (Drosophila virilis (Fruit fly)).